Consider the following 69-residue polypeptide: Sperm protamine P1 (69 aa).

Basic residues-rich tracts occupy residues 1-30 and 37-69; these read MARF…RRGG and KITR…RRRN. The segment at 1-69 is disordered; that stretch reads MARFRPSRSR…SRRRRRRRRN (69 aa).

It belongs to the protamine P1 family. As to expression, testis.

The protein resides in the nucleus. The protein localises to the chromosome. In terms of biological role, protamines substitute for histones in the chromatin of sperm during the haploid phase of spermatogenesis. They compact sperm DNA into a highly condensed, stable and inactive complex. This is Sperm protamine P1 (PRM1) from Tachyglossus aculeatus aculeatus (Southeast Australian short-beaked echidna).